The following is a 432-amino-acid chain: Adenylosuccinate synthetase (432 aa).

Residues 13–19 (GDEGKGK) and 41–43 (GHT) each bind GTP. Asp-14 serves as the catalytic Proton acceptor. Mg(2+) is bound by residues Asp-14 and Gly-41. IMP is bound by residues 14–17 (DEGK), 39–42 (NAGH), Thr-130, Arg-144, Gln-225, Thr-240, and Arg-304. The active-site Proton donor is His-42. Substrate is bound at residue 300 to 306 (ATTGRRR). GTP is bound by residues Arg-306, 332 to 334 (KLD), and 415 to 417 (STG).

It belongs to the adenylosuccinate synthetase family. Homodimer. The cofactor is Mg(2+).

The protein localises to the cytoplasm. It catalyses the reaction IMP + L-aspartate + GTP = N(6)-(1,2-dicarboxyethyl)-AMP + GDP + phosphate + 2 H(+). The protein operates within purine metabolism; AMP biosynthesis via de novo pathway; AMP from IMP: step 1/2. Functionally, plays an important role in the de novo pathway of purine nucleotide biosynthesis. Catalyzes the first committed step in the biosynthesis of AMP from IMP. The sequence is that of Adenylosuccinate synthetase from Klebsiella pneumoniae (strain 342).